We begin with the raw amino-acid sequence, 239 residues long: Glucosamine-6-phosphate deaminase (239 aa).

Asp62 functions as the Proton acceptor; for enolization step in the catalytic mechanism. The active-site For ring-opening step is the Asn128. His130 (proton acceptor; for ring-opening step) is an active-site residue. Residue Glu135 is the For ring-opening step of the active site.

It belongs to the glucosamine/galactosamine-6-phosphate isomerase family. NagB subfamily.

The enzyme catalyses alpha-D-glucosamine 6-phosphate + H2O = beta-D-fructose 6-phosphate + NH4(+). Its pathway is amino-sugar metabolism; N-acetylneuraminate degradation; D-fructose 6-phosphate from N-acetylneuraminate: step 5/5. Functionally, catalyzes the reversible isomerization-deamination of glucosamine 6-phosphate (GlcN6P) to form fructose 6-phosphate (Fru6P) and ammonium ion. The sequence is that of Glucosamine-6-phosphate deaminase from Lactobacillus acidophilus (strain ATCC 700396 / NCK56 / N2 / NCFM).